The chain runs to 153 residues: Protein SREK1IP1 (153 aa).

The segment at 13–30 (AGCRKCGYPGHLTFECRN) adopts a CCHC-type zinc-finger fold. The disordered stretch occupies residues 44–153 (VSSTSSEDSD…SPNRSEVTKK (110 aa)). Position 52 is a phosphoserine (serine 52). The segment covering 66 to 84 (QEKRINEEEEKKKEKSREK) has biased composition (basic and acidic residues). The segment covering 85 to 94 (IKLKKKRKRS) has biased composition (basic residues). A phosphoserine mark is found at serine 96 and serine 97. The span at 106-141 (QKKQKYQKKEKKKEKKNKSKKGKHHKKEKKKRKKEK) shows a compositional bias: basic residues.

In terms of assembly, interacts with SREK1/SFRS12.

Its function is as follows. Possible splicing regulator involved in the control of cellular survival. In Rattus norvegicus (Rat), this protein is Protein SREK1IP1 (Srek1ip1).